The chain runs to 324 residues: Calmodulin-like protein 12 (324 aa).

6 consecutive EF-hand domains span residues 8–43 (DQITEYRESFRLFDKNGDGSITKKELGTMMRSIGEK), 44–79 (PTKADLQDLMNEADLDGDGTIDFPEFLCVMAKNQGH), 97–132 (DQITEYRESFRLFDKNGDGSITKKELRTVMFSLGKN), 133–168 (RTKADLQDMMNEVDLDGDGTIDFPEFLYLMAKNQGH), 187–222 (DQILEFREAFRVFDKNGDGYITVNELRTTMRSLGET), and 223–258 (QTKAELQDMINEADADGDGTISFSEFVCVMTGKMID). Residues aspartate 21, asparagine 23, aspartate 25, serine 27, glutamate 32, aspartate 57, aspartate 59, aspartate 61, threonine 63, glutamate 68, aspartate 110, asparagine 112, aspartate 114, serine 116, glutamate 121, aspartate 146, aspartate 148, aspartate 150, threonine 152, glutamate 157, aspartate 200, asparagine 202, aspartate 204, tyrosine 206, glutamate 211, aspartate 236, aspartate 238, aspartate 240, threonine 242, and glutamate 247 each contribute to the Ca(2+) site.

Belongs to the calmodulin family. As to quaternary structure, interacts with PID. Binds to ABCG36.

In terms of biological role, potential calcium sensor that binds calcium in vitro. In Arabidopsis thaliana (Mouse-ear cress), this protein is Calmodulin-like protein 12.